The sequence spans 185 residues: Ribosome-recycling factor (185 aa).

Belongs to the RRF family.

It is found in the cytoplasm. Its function is as follows. Responsible for the release of ribosomes from messenger RNA at the termination of protein biosynthesis. May increase the efficiency of translation by recycling ribosomes from one round of translation to another. This chain is Ribosome-recycling factor, found in Thermus thermophilus (strain ATCC BAA-163 / DSM 7039 / HB27).